The following is a 1582-amino-acid chain: Adhesion G protein-coupled receptor B1 (1582 aa).

The signal sequence occupies residues Met1–Gly33. At Ala34–Ser948 the chain is on the extracellular side. Residue Asn64 is glycosylated (N-linked (GlcNAc...) asparagine). The region spanning Ala261 to Gly315 is the TSP type-1 1 domain. Cystine bridges form between Cys273–Cys309, Cys277–Cys314, and Cys288–Cys299. A disordered region spans residues Ala313–Arg335. Residues Arg319–Ser329 show a composition bias toward low complexity. TSP type-1 domains lie at Asp354–Pro407, His409–Pro462, Asp467–Pro520, and Asp522–Pro575. Disulfide bonds link Cys366–Cys400, Cys370–Cys406, Cys381–Cys390, Cys421–Cys456, Cys425–Cys461, Cys436–Cys446, Cys479–Cys514, Cys483–Cys519, Cys494–Cys504, Cys534–Cys569, Cys538–Cys574, Cys549–Cys559, Cys581–Cys616, and Cys604–Cys634. N-linked (GlcNAc...) asparagine glycosylation is present at Asn401. A glycan (N-linked (GlcNAc...) asparagine) is linked at Asn607. Residue Thr609 is modified to Phosphothreonine. N-linked (GlcNAc...) asparagine glycosylation is found at Asn692, Asn844, Asn877, and Asn881. In terms of domain architecture, GAIN-B spans Arg760–Ala939. 2 disulfide bridges follow: Cys884–Cys921 and Cys909–Cys923. A GPS region spans residues Cys884 to Ala939. Residues Ser927–Lys943 form an N-terminal stalk following vasculostatin-120 cleavage which is not required for signaling activity region. The helical transmembrane segment at Val949 to Tyr969 threads the bilayer. Residues Val970–Arg980 lie on the Cytoplasmic side of the membrane. Residues Ser981–Gly1001 form a helical membrane-spanning segment. Over Gln1002–Lys1008 the chain is Extracellular. A helical transmembrane segment spans residues Val1009–Val1029. Topologically, residues Leu1030–Arg1052 are cytoplasmic. A helical transmembrane segment spans residues Phe1053 to Lys1073. Over Ala1074 to Tyr1093 the chain is Extracellular. A helical transmembrane segment spans residues Ala1094–Phe1114. Residues Asn1115–Leu1136 lie on the Cytoplasmic side of the membrane. A helical transmembrane segment spans residues Trp1137–Val1157. Topologically, residues Thr1158–Gln1166 are extracellular. Residues Ile1167–Leu1187 form a helical membrane-spanning segment. Residues Arg1188–Val1582 lie on the Cytoplasmic side of the membrane. The involved in interaction with MAGI1 stretch occupies residues Tyr1363–Val1582. The tract at residues Pro1382–Leu1549 is disordered. Pro residues predominate over residues Arg1389–Pro1435. The span at Gly1441 to Ala1455 shows a compositional bias: low complexity. At Ser1467 the chain carries Phosphoserine. 2 stretches are compositionally biased toward basic and acidic residues: residues Leu1468–Met1484 and Gln1491–Lys1520. Positions Gln1579 to Val1582 are indispensable for interaction with MAGI1.

Belongs to the G-protein coupled receptor 2 family. LN-TM7 subfamily. As to quaternary structure, interacts with ELMO1 and DOCK1. When bound to ELMO1 and DOCK1, acts as a module to promote apoptotic cell engulfment. Interacts with MDM2; the interaction results in inhibition of MDM2-mediated ubiquitination and degradation of DLG4/PSD95. Interacts with PARD3 and TIAM1; the interaction is required for correct dendritic localization of PARD3 and TIAM1 and for dendritic spine formation. Interacts with MAGI1, MAGI3 and BAIAP2. Interacts with PHYHIP. Interacts with DLG4 (via PDZ domain). Vasculostatin-120: Interacts with CD36. Vasculostatin-120: Interacts with ARRB2. Interacts with BAIAP3; this interaction is direct. In terms of processing, proteolytically cleaved to produce vasculostatin-40 and vasculostatin-120. Vasculostatin-40 is the major form and is produced through proteolytic cleavage by MMP14 between residues 321 and 329 with cleavage likely to be between Ser-326 and Leu-327. Post-translationally, ubiquitinated. As to expression, in brain, widespread expression in all neuropil-rich zones including spinal cord gray matter, cerebellar molecular layer, cerebral cortex, thalamic nuclei and basal ganglia with no expression in white matter (at protein level). In the cerebellar molecular layer, highly expressed in interneuron processes whereas Purkinje cells and their dendrites show weaker expression (at protein level). In the olfactory bulb, highly expressed in glomeruli (at protein level). In the retina, highly concentrated in the outer and inner plexiform layers (at protein level). Expressed in brain. Enriched in hippocampus and cortex. Also detected in other tissues including bone marrow and spleen.

The protein localises to the cell membrane. It localises to the cell projection. Its subcellular location is the phagocytic cup. It is found in the cell junction. The protein resides in the focal adhesion. The protein localises to the dendritic spine. It localises to the postsynaptic density. Its subcellular location is the secreted. Phosphatidylserine receptor which enhances the engulfment of apoptotic cells. Also mediates the binding and engulfment of Gram-negative bacteria. Stimulates production of reactive oxygen species by macrophages in response to Gram-negative bacteria, resulting in enhanced microbicidal macrophage activity. In the gastric mucosa, required for recognition and engulfment of apoptotic gastric epithelial cells. Promotes myoblast fusion. Activates the Rho pathway in a G-protein-dependent manner. Inhibits MDM2-mediated ubiquitination and degradation of DLG4/PSD95, promoting DLG4 stability and regulating synaptic plasticity. Required for the formation of dendritic spines by ensuring the correct localization of PARD3 and TIAM1. Potent inhibitor of angiogenesis in brain and may play a significant role as a mediator of the p53/TP53 signal in suppression of glioblastoma. In terms of biological role, inhibits angiogenesis in a CD36-dependent manner. Its function is as follows. Inhibits angiogenesis. The sequence is that of Adhesion G protein-coupled receptor B1 from Mus musculus (Mouse).